The sequence spans 130 residues: Small ribosomal subunit protein uS11c (130 aa).

This sequence belongs to the universal ribosomal protein uS11 family. As to quaternary structure, part of the 30S ribosomal subunit.

It is found in the plastid. The protein resides in the chloroplast. This is Small ribosomal subunit protein uS11c from Tupiella akineta (Green alga).